The chain runs to 227 residues: Nitrobenzene nitroreductase (227 aa).

14 to 18 is an FMN binding site; sequence RRAKR. NADP(+) contacts are provided by S44 and I109. Residues 172 to 173 and K215 each bind FMN; that span reads VF.

The protein belongs to the nitroreductase family. As to quaternary structure, monomer. The cofactor is FMN.

It catalyses the reaction N-phenylhydroxylamine + 2 NADP(+) + H2O = nitrobenzene + 2 NADPH + 2 H(+). The protein operates within xenobiotic degradation; nitrobenzene degradation. Its activity is regulated as follows. Inhibited by dicumarol, p-hydroxymercuribenzoate and salicyl hydroxamate. Functionally, involved in the biodegradation of nitroaromatic compounds. Catalyzes the two-electron reduction of nitrobenzene (NB) to produce a nitrosobenzene (NOB) intermediate, which is immediately reduced to hydroxylaminobenzene (HAB) by a second two-electron transfer. Also active on menadione and nitrofurazone. Replacing NADPH with NADH results in a 4-fold decrease in the reaction rate. The chain is Nitrobenzene nitroreductase from Ectopseudomonas oleovorans (Pseudomonas oleovorans).